The chain runs to 410 residues: Multifunctional CCA protein (410 aa).

Positions 8 and 11 each coordinate ATP. 2 residues coordinate CTP: Gly-8 and Arg-11. Residues Glu-21 and Asp-23 each coordinate Mg(2+). The ATP site is built by Arg-91, Arg-137, and Arg-140. The CTP site is built by Arg-91, Arg-137, and Arg-140. In terms of domain architecture, HD spans 228–329; sequence TGIHVMMALR…LKLFDRLDVW (102 aa).

The protein belongs to the tRNA nucleotidyltransferase/poly(A) polymerase family. Bacterial CCA-adding enzyme type 1 subfamily. In terms of assembly, monomer. Can also form homodimers and oligomers. Requires Mg(2+) as cofactor. The cofactor is Ni(2+).

The enzyme catalyses a tRNA precursor + 2 CTP + ATP = a tRNA with a 3' CCA end + 3 diphosphate. It catalyses the reaction a tRNA with a 3' CCA end + 2 CTP + ATP = a tRNA with a 3' CCACCA end + 3 diphosphate. In terms of biological role, catalyzes the addition and repair of the essential 3'-terminal CCA sequence in tRNAs without using a nucleic acid template. Adds these three nucleotides in the order of C, C, and A to the tRNA nucleotide-73, using CTP and ATP as substrates and producing inorganic pyrophosphate. tRNA 3'-terminal CCA addition is required both for tRNA processing and repair. Also involved in tRNA surveillance by mediating tandem CCA addition to generate a CCACCA at the 3' terminus of unstable tRNAs. While stable tRNAs receive only 3'-terminal CCA, unstable tRNAs are marked with CCACCA and rapidly degraded. The chain is Multifunctional CCA protein from Tolumonas auensis (strain DSM 9187 / NBRC 110442 / TA 4).